A 785-amino-acid chain; its full sequence is MRVPFSWLKAYVPELESPEVLEERLAGLGFETDRIERVFPIPRGVVFARVLEAHPIPGTRLKRLVLDAGRTVEVVSGAENARKGIGVALALPGTELPGLGQKVGERVIQGVRSFGMALSPRELGVGEYGGGLLEFPEDALPPGTPLSEAWPEEVVLDLEVTPNRPDALGLLGLARDLHALGYALVEPEAALKAEALPLPFALKVEDPEGAPHFTLGYAFGLRVAPSPLWMQRALFAAGMRPINNVVDVTNYVMLERAQPMHAFDLRFVGEGIAVRRAREGERLKTLDGVERTLHPEDLVIAGWRGEESFPLGLAGVMGGAESEVREDTEAIALEVACFDPVSIRKTARRHGLRTEASHRFERGVDPLGQVPAQRRALSLLQALAGARVAEALLEAGSPKPPEAIPFRPEYANRLLGTSYPEAEQIAILKRLGCRVEGEGPTYRVTPPSHRLDLRLEEDLVEEVARIQGYETIPLALPAFFPAPDNRGVEAPYRKEQRLREVLSGLGFQEVYTYSFMDPEDARRFRLDPPRLLLLNPLAPEKAALRTHLFPGLVRVLKENLDLDRPERALLFEVGRVFREREETHLAGLLFGEGVGLPWAKERLSGYFLLKGYLEALFARLGLAFRVEAQAFPFLHPGVSGRVLVEGEEVGFLGALHPEIAQELELPPVHLFELRLPLPDKPLAFQDPSRHPAAFRDLAVVVPAPTPYGEVEALVREAAGPYLESLALFDLYQGPPLPEGHKSLAFHLRFRHPKRTLRDEEVEEAVSRVAEALRARGFGLRGLDTP.

The region spanning 39 to 147 is the tRNA-binding domain; sequence FPIPRGVVFA…DALPPGTPLS (109 aa). The region spanning 399-474 is the B5 domain; that stretch reads KPPEAIPFRP…RIQGYETIPL (76 aa). 4 residues coordinate Mg(2+): Asp-452, Asp-458, Glu-461, and Glu-462. The region spanning 688–780 is the FDX-ACB domain; it reads SRHPAAFRDL…ALRARGFGLR (93 aa).

It belongs to the phenylalanyl-tRNA synthetase beta subunit family. Type 1 subfamily. Tetramer of two alpha and two beta subunits. It depends on Mg(2+) as a cofactor.

The protein localises to the cytoplasm. The enzyme catalyses tRNA(Phe) + L-phenylalanine + ATP = L-phenylalanyl-tRNA(Phe) + AMP + diphosphate + H(+). The sequence is that of Phenylalanine--tRNA ligase beta subunit (pheT) from Thermus thermophilus (strain ATCC 27634 / DSM 579 / HB8).